The primary structure comprises 188 residues: Photosystem I assembly protein Ycf4 (188 aa).

2 helical membrane-spanning segments follow: residues 26–46 and 68–88; these read YFWA…GLSS and LVMG…WFVI.

This sequence belongs to the Ycf4 family.

It is found in the cellular thylakoid membrane. Its function is as follows. Seems to be required for the assembly of the photosystem I complex. The protein is Photosystem I assembly protein Ycf4 of Synechococcus elongatus (strain ATCC 33912 / PCC 7942 / FACHB-805) (Anacystis nidulans R2).